A 249-amino-acid polypeptide reads, in one-letter code: NAD(P)H-hydrate epimerase (249 aa).

A YjeF N-terminal domain is found at 11-233 (AQQIDVELMS…ELGKKHELNI (223 aa)). 62–66 (NQGGD) provides a ligand contact to (6S)-NADPHX. K(+) contacts are provided by Gln-63 and Asp-127. (6S)-NADPHX-binding positions include 131 to 137 (GFSFQPP) and Asp-162. Ser-165 provides a ligand contact to K(+).

The protein belongs to the NnrE/AIBP family. K(+) serves as cofactor.

The protein localises to the cytoplasm. The protein resides in the mitochondrion. The catalysed reaction is (6R)-NADHX = (6S)-NADHX. The enzyme catalyses (6R)-NADPHX = (6S)-NADPHX. In terms of biological role, catalyzes the epimerization of the S- and R-forms of NAD(P)HX, a damaged form of NAD(P)H that is a result of enzymatic or heat-dependent hydration. This is a prerequisite for the S-specific NAD(P)H-hydrate dehydratase to allow the repair of both epimers of NAD(P)HX. This Cryptococcus neoformans var. neoformans serotype D (strain JEC21 / ATCC MYA-565) (Filobasidiella neoformans) protein is NAD(P)H-hydrate epimerase.